Reading from the N-terminus, the 147-residue chain is Basic phospholipase A2 beta-bungarotoxin A1 chain (147 aa).

Positions 1–19 (MNPAHLLVLSAVCVSLLGA) are cleaved as a signal peptide. A propeptide spanning residues 20–27 (ANIPPHPL) is cleaved from the precursor. Disulfide bonds link C54–C146, C56–C72, C71–C127, C78–C120, C88–C113, and C106–C118. Residues Y55, G57, and G59 each contribute to the Ca(2+) site. H75 is a catalytic residue. D76 contacts Ca(2+). The active site involves D121.

Belongs to the phospholipase A2 family. Group I subfamily. D49 sub-subfamily. Heterodimer; disulfide-linked. The A chains have phospholipase A2 activity and the B chains show homology with the basic protease inhibitors. The A1 chain is found in beta-1 and beta-2 bungarotoxins. Requires Ca(2+) as cofactor. Expressed by the venom gland.

The protein localises to the secreted. The catalysed reaction is a 1,2-diacyl-sn-glycero-3-phosphocholine + H2O = a 1-acyl-sn-glycero-3-phosphocholine + a fatty acid + H(+). Its function is as follows. Snake venom phospholipase A2 (PLA2) that inhibits neuromuscular transmission by blocking acetylcholine release from the nerve termini. PLA2 catalyzes the calcium-dependent hydrolysis of the 2-acyl groups in 3-sn-phosphoglycerides. The polypeptide is Basic phospholipase A2 beta-bungarotoxin A1 chain (Bungarus multicinctus (Many-banded krait)).